We begin with the raw amino-acid sequence, 410 residues long: LL-diaminopimelate aminotransferase (410 aa).

Residues Y15 and G42 each coordinate substrate. Pyridoxal 5'-phosphate contacts are provided by residues Y72, 108–109, Y132, N187, Y218, and 246–248; these read AK and SFS. 3 residues coordinate substrate: K109, Y132, and N187. K249 carries the N6-(pyridoxal phosphate)lysine modification. R257 and N292 together coordinate pyridoxal 5'-phosphate. Substrate is bound by residues N292 and R388.

Belongs to the class-I pyridoxal-phosphate-dependent aminotransferase family. LL-diaminopimelate aminotransferase subfamily. Homodimer. Pyridoxal 5'-phosphate is required as a cofactor.

It carries out the reaction (2S,6S)-2,6-diaminopimelate + 2-oxoglutarate = (S)-2,3,4,5-tetrahydrodipicolinate + L-glutamate + H2O + H(+). The protein operates within amino-acid biosynthesis; L-lysine biosynthesis via DAP pathway; LL-2,6-diaminopimelate from (S)-tetrahydrodipicolinate (aminotransferase route): step 1/1. Its function is as follows. Involved in the synthesis of meso-diaminopimelate (m-DAP or DL-DAP), required for both lysine and peptidoglycan biosynthesis. Catalyzes the direct conversion of tetrahydrodipicolinate to LL-diaminopimelate. This chain is LL-diaminopimelate aminotransferase, found in Picosynechococcus sp. (strain ATCC 27264 / PCC 7002 / PR-6) (Agmenellum quadruplicatum).